The chain runs to 547 residues: Chaperonin GroEL (547 aa).

Residues 29–32 (TLGP), K50, 86–90 (DGTTT), G414, 478–480 (NAA), and D494 contribute to the ATP site.

This sequence belongs to the chaperonin (HSP60) family. As to quaternary structure, forms a cylinder of 14 subunits composed of two heptameric rings stacked back-to-back. Interacts with the co-chaperonin GroES.

The protein localises to the cytoplasm. The catalysed reaction is ATP + H2O + a folded polypeptide = ADP + phosphate + an unfolded polypeptide.. Together with its co-chaperonin GroES, plays an essential role in assisting protein folding. The GroEL-GroES system forms a nano-cage that allows encapsulation of the non-native substrate proteins and provides a physical environment optimized to promote and accelerate protein folding. In Saccharophagus degradans (strain 2-40 / ATCC 43961 / DSM 17024), this protein is Chaperonin GroEL.